The following is a 748-amino-acid chain: Holliday junction recognition protein (748 aa).

A phosphoserine mark is found at serine 123, serine 140, serine 185, serine 201, and serine 211. Residues 191-226 (PGYCSRISRKSPGDPAKPASSPREWDPLHPSSTDMA) form a disordered region. A Glycyl lysine isopeptide (Lys-Gly) (interchain with G-Cter in SUMO2) cross-link involves residue lysine 354. Phosphoserine is present on residues serine 412, serine 448, and serine 473. Serine 486 carries the phosphoserine; by PKB/AKT1 modification. Serine 496 bears the Phosphoserine mark. The disordered stretch occupies residues 512–574 (GRCLPKSDSS…PDKEVPGHGR (63 aa)). Residues 524-562 (LPKTNPTHSATRPQQTSDLHVQGNSSGIFRKSVSPSKTL) show a composition bias toward polar residues. Over residues 565-574 (PDKEVPGHGR) the composition is skewed to basic and acidic residues. Residues lysine 581 and lysine 586 each participate in a glycyl lysine isopeptide (Lys-Gly) (interchain with G-Cter in SUMO2) cross-link. Phosphoserine occurs at positions 595 and 642. The tract at residues 670–748 (RDGTRDHQFP…MLEKLETKSV (79 aa)) is disordered. Positions 688–699 (PQGSGRQGNSLG) are enriched in polar residues. Basic and acidic residues predominate over residues 721–748 (SEERGENTSYRMEEKSDFMLEKLETKSV).

As to quaternary structure, interacts with CENPA (via CATD domain); the interaction is direct and specific for CENPA since it does not interact with H3.1- or H3.3-containing nucleosomes. Heterotrimer composed of HJURP, CENPA and histone H4, where HJURP interacts with the dimer formed by CENPA and histone H4 and prevents tetramerization of CENPA and H4. Identified in a centromere complex containing histones H2A, H2B and H4, and at least CENPA, CENPB, CENPC, CENPT, CENPN, HJURP, SUPT16H, SSRP1 and RSF1. Interacts with 14-3-3 family members in a phosphorylation-dependent manner. Interacts with MSH5 and NBN. According to PubMed:17256767, highly expressed in the thymus with lower levels in the placenta, small intestine, liver, skeletal muscle, and colon. According to PubMed:17823411, highly expressed in testis, and at a relatively lower level in thymus and bone marrow. Significantly overexpressed in many lung cancer samples, compared with normal lung.

The protein localises to the nucleus. Its subcellular location is the nucleolus. It is found in the chromosome. It localises to the centromere. Functionally, centromeric protein that plays a central role in the incorporation and maintenance of histone H3-like variant CENPA at centromeres. Acts as a specific chaperone for CENPA and is required for the incorporation of newly synthesized CENPA molecules into nucleosomes at replicated centromeres. Prevents CENPA-H4 tetramerization and prevents premature DNA binding by the CENPA-H4 tetramer. Directly binds Holliday junctions. The polypeptide is Holliday junction recognition protein (HJURP) (Homo sapiens (Human)).